Reading from the N-terminus, the 481-residue chain is UDP-glycosyltransferase 85A2 (481 aa).

UDP-alpha-D-glucose contacts are provided by residues S303, 360 to 362, 377 to 385, and 399 to 402; these read CPQ, HCGWNSTLE, and FAEQ.

Belongs to the UDP-glycosyltransferase family. Expressed in roots, shoots, leaves and flowers.

This chain is UDP-glycosyltransferase 85A2 (UGT85A2), found in Arabidopsis thaliana (Mouse-ear cress).